The following is a 198-amino-acid chain: Altered inheritance of mitochondria protein 34, mitochondrial (198 aa).

Residues 1–55 constitute a mitochondrion transit peptide; sequence MSISLFGRIVSQQFSGIRAAGPGRSLYLPFTLLLKQPGAYKVSLHRYVHSTQTKS. One can recognise an SAP domain in the interval 69–103; it reads FQKFTVKVLKEQCKSRGLKLSGRKSDLLQRLITHD. The helical transmembrane segment at 172 to 187 threads the bilayer; the sequence is IFLLGFFMLSCLWWNL.

It belongs to the AIM34 family.

It localises to the mitochondrion membrane. In Saccharomyces cerevisiae (strain JAY291) (Baker's yeast), this protein is Altered inheritance of mitochondria protein 34, mitochondrial (AIM34).